A 534-amino-acid chain; its full sequence is Protein TIC 62, chloroplastic (534 aa).

The N-terminal 64 residues, 1–64 (MPMEVFSLTS…SSSSSSSSIR (64 aa)), are a transit peptide targeting the chloroplast. The disordered stretch occupies residues 50-83 (NNRIRSSSSSSSSIRAQASGSTKSSTAEGIPEKT). Polar residues predominate over residues 63–76 (IRAQASGSTKSSTA). NADP(+) is bound at residue 91–120 (VFVAGATGKVGSRTVRELIKLGFKVRAGVR). Positions 334–534 (PSQRPYIPSP…ASPSPSFRKS (201 aa)) are disordered. Over residues 350-360 (DTATVSNTGPS) the composition is skewed to polar residues. Repeat unit 1 spans residues 387 to 408 (PLSPYTAYDDLKPPSSPSPTKP). The interval 387–532 (PLSPYTAYDD…PPASPSPSFR (146 aa)) is 3 X 22 AA approximate repeats. Low complexity predominate over residues 421–432 (PTPISSDTPSSI). Residues 450 to 471 (SLSPYAAYPDLKPPSSPSPSVP) form repeat 2. Residues 460-469 (LKPPSSPSPS) show a composition bias toward pro residues. The segment covering 495–509 (DTPKNEEQHLHEPKS) has biased composition (basic and acidic residues). Copy 3 of the repeat occupies 511-532 (PLSPYAMYEDLKPPASPSPSFR).

Part of the Tic complex. Interacts with TIC40, TIC110 and TIC55. Interacts (via C-terminus) with PETH/FNR.

Its subcellular location is the plastid. The protein localises to the chloroplast inner membrane. The protein resides in the chloroplast stroma. Involved in protein precursor import into chloroplasts. Part of the redox regulon consisting of TIC32, TIC 55 and TIC62. Has a NADPH-dependent dehydrogenase activity, but only after preincubation with lipids. The polypeptide is Protein TIC 62, chloroplastic (TIC62) (Pisum sativum (Garden pea)).